Consider the following 497-residue polypeptide: MMKESSKWIAAFVEIIIENGDWTETDRYYLTNRIAKLVGCDFFEQPEAVACEQEPLRVVEHLLNIAQANHQIDDSITEAEQLEAELMDFITPTPTIINQKFMDYYQESPRKATDYFYQLCKTNNYIKTKAIAKNIIFPMDSPYGKLEITINLSKPEKDARKILAEKKMSQKKYPACMLCMENEGYYGRVNYPARTNHRIIRLNLEDEAWGFQYSPYAYYNEHAIFLDQQHREMKIEKKTFQRLLKITELFPEYFVGSNADLPIVGGSILSHDHYQAGRHTFPMDLAPMEKRFSLKKYPEITAGILKWPMSVIRLQSDRQEELVEAAELILTKWRNYSDERVSVRAYSKDGTPHHTITPIARRKGSLFELDLVLRDNNVSEEFPDGIFHPHPEVQHIKQENIGLIEVMGLAILPPRLAQELREVEKYLLKQPNQIAESHRAWADELSQQTITEANVKEVIQQGIGTIFVQILTDAGVFKRDEEGRRAFERFIQCIEND.

The protein belongs to the galactose-1-phosphate uridylyltransferase type 2 family.

It localises to the cytoplasm. It catalyses the reaction alpha-D-galactose 1-phosphate + UDP-alpha-D-glucose = alpha-D-glucose 1-phosphate + UDP-alpha-D-galactose. Its pathway is carbohydrate metabolism; galactose metabolism. In Enterococcus faecalis (strain ATCC 700802 / V583), this protein is Galactose-1-phosphate uridylyltransferase.